Consider the following 484-residue polypeptide: UDP-N-acetylmuramate--L-alanine ligase (484 aa).

125–131 (GTHGKTT) provides a ligand contact to ATP.

The protein belongs to the MurCDEF family.

The protein resides in the cytoplasm. It catalyses the reaction UDP-N-acetyl-alpha-D-muramate + L-alanine + ATP = UDP-N-acetyl-alpha-D-muramoyl-L-alanine + ADP + phosphate + H(+). The protein operates within cell wall biogenesis; peptidoglycan biosynthesis. Cell wall formation. In Buchnera aphidicola subsp. Acyrthosiphon pisum (strain Tuc7), this protein is UDP-N-acetylmuramate--L-alanine ligase.